A 217-amino-acid polypeptide reads, in one-letter code: Adenylate kinase (217 aa).

11–16 (GAGKGT) lines the ATP pocket. Residues 31–60 (STGDMFREAMANETPVGLEAKSYIDKGDLV) form an NMP region. Residues Thr32, Arg37, 58–60 (DLV), 86–89 (GFPR), and Gln93 each bind AMP. The tract at residues 127-165 (ARYICKNCGATYNKISNPTKVEGTCDRCGGHEFFQREDD) is LID. Arg128 serves as a coordination point for ATP. Residues Cys131 and Cys134 each contribute to the Zn(2+) site. 137 to 138 (TY) contributes to the ATP binding site. Residues Cys151 and Cys154 each coordinate Zn(2+). AMP contacts are provided by Arg162 and Arg173. Gln201 contacts ATP.

Belongs to the adenylate kinase family. As to quaternary structure, monomer.

Its subcellular location is the cytoplasm. The enzyme catalyses AMP + ATP = 2 ADP. It functions in the pathway purine metabolism; AMP biosynthesis via salvage pathway; AMP from ADP: step 1/1. In terms of biological role, catalyzes the reversible transfer of the terminal phosphate group between ATP and AMP. Plays an important role in cellular energy homeostasis and in adenine nucleotide metabolism. This is Adenylate kinase from Lactobacillus gasseri (strain ATCC 33323 / DSM 20243 / BCRC 14619 / CIP 102991 / JCM 1131 / KCTC 3163 / NCIMB 11718 / NCTC 13722 / AM63).